The chain runs to 572 residues: Proline--tRNA ligase (572 aa).

The protein belongs to the class-II aminoacyl-tRNA synthetase family. ProS type 1 subfamily. Homodimer.

It is found in the cytoplasm. The enzyme catalyses tRNA(Pro) + L-proline + ATP = L-prolyl-tRNA(Pro) + AMP + diphosphate. Functionally, catalyzes the attachment of proline to tRNA(Pro) in a two-step reaction: proline is first activated by ATP to form Pro-AMP and then transferred to the acceptor end of tRNA(Pro). As ProRS can inadvertently accommodate and process non-cognate amino acids such as alanine and cysteine, to avoid such errors it has two additional distinct editing activities against alanine. One activity is designated as 'pretransfer' editing and involves the tRNA(Pro)-independent hydrolysis of activated Ala-AMP. The other activity is designated 'posttransfer' editing and involves deacylation of mischarged Ala-tRNA(Pro). The misacylated Cys-tRNA(Pro) is not edited by ProRS. In Yersinia pestis bv. Antiqua (strain Antiqua), this protein is Proline--tRNA ligase.